Consider the following 570-residue polypeptide: Putative ABC transporter ATP-binding protein SACOL2708 (570 aa).

ABC transporter domains follow at residues 6-247 and 304-537; these read ISFK…GIRE and LELN…ASLR. ATP is bound by residues 40 to 47 and 338 to 345; these read GASGSGKS and GHNGAGKS.

It belongs to the ABC transporter superfamily.

The protein resides in the cell membrane. Its function is as follows. Probably part of an ABC transporter complex. Responsible for energy coupling to the transport system. The chain is Putative ABC transporter ATP-binding protein SACOL2708 from Staphylococcus aureus (strain COL).